The following is a 252-amino-acid chain: Hydroxyacylglutathione hydrolase (252 aa).

The Zn(2+) site is built by H54, H56, D58, H59, H111, D130, and H170.

This sequence belongs to the metallo-beta-lactamase superfamily. Glyoxalase II family. In terms of assembly, monomer. Requires Zn(2+) as cofactor.

The enzyme catalyses an S-(2-hydroxyacyl)glutathione + H2O = a 2-hydroxy carboxylate + glutathione + H(+). It functions in the pathway secondary metabolite metabolism; methylglyoxal degradation; (R)-lactate from methylglyoxal: step 2/2. Functionally, thiolesterase that catalyzes the hydrolysis of S-D-lactoyl-glutathione to form glutathione and D-lactic acid. The polypeptide is Hydroxyacylglutathione hydrolase (Francisella philomiragia subsp. philomiragia (strain ATCC 25017 / CCUG 19701 / FSC 153 / O#319-036)).